A 274-amino-acid chain; its full sequence is Large ribosomal subunit protein uL2cz/uL2cy (274 aa).

2 disordered regions span residues 1-24 (MAIHLYKTSTPSTRNGTVDSQVKS) and 223-274 (MNPV…RRSK). Positions 7 to 24 (KTSTPSTRNGTVDSQVKS) are enriched in polar residues.

The protein belongs to the universal ribosomal protein uL2 family. Part of the 50S ribosomal subunit.

The protein localises to the plastid. Its subcellular location is the chloroplast. The polypeptide is Large ribosomal subunit protein uL2cz/uL2cy (rpl2-A) (Nicotiana sylvestris (Wood tobacco)).